We begin with the raw amino-acid sequence, 737 residues long: Delta and Notch-like epidermal growth factor-related receptor (737 aa).

Residues 1–34 form the signal peptide; sequence MQPRRAQAPGAQLLPALALLLLLLGAGPRGSSLA. Residues 35-640 lie on the Extracellular side of the membrane; it reads NPVPAAPLSA…LTNMPRHSLY (606 aa). 2 consecutive EGF-like domains span residues 44–92 and 94–133; these read APGP…ANCQ and VADP…PNCE. Positions 44-133 are interaction with NOTCH1; it reads APGPCAAQPC…NEGYEGPNCE (90 aa). 6 cysteine pairs are disulfide-bonded: C48–C59, C53–C80, C82–C91, C98–C108, C103–C121, and C123–C132. An N-linked (GlcNAc...) asparagine glycan is attached at N223. 5 consecutive EGF-like domains span residues 309–348, 349–390, 392–428, 430–466, and 468–503; these read PGES…TFCE, EYDA…ELCQ, KIDY…SACE, KVDP…PTCA, and LIDF…LYCE. Disulfide bonds link C319–C336, C338–C347, C353–C364, C358–C378, C380–C389, C396–C407, C401–C416, C418–C427, C434–C445, C439–C454, C456–C465, C472–C482, C477–C491, C493–C502, C509–C520, C514–C529, C531–C540, C547–C558, C552–C567, C569–C578, C585–C596, C590–C605, and C607–C616. The region spanning 505–541 is the EGF-like 8; calcium-binding domain; sequence EYNECLSAPCLNAATCRDLVNGYECVCLAEYKGTHCE. The EGF-like 9 domain maps to 543-579; sequence YKDPCANVSCLNGATCDSDGLNGTCICAPGFTGEECD. Residues 546 to 568 form the Follistatin-like domain; it reads PCANVSCLNGATCDSDGLNGTCI. N564 carries N-linked (GlcNAc...) asparagine glycosylation. The EGF-like 10; calcium-binding domain maps to 581–617; that stretch reads DINECDSNPCHHGGSCLDQPNGYNCHCPHGWVGANCE. The helical transmembrane segment at 641 to 661 threads the bilayer; sequence IIIGALCVAFILMLIILIVGI. Over 662 to 737 the chain is Cytoplasmic; sequence CRISRIEYQG…LVTLIKTKDL (76 aa). An interaction with AP1G1 and somatodendritic targeting region spans residues 677 to 680; the sequence is YEEF. At S685 the chain carries Phosphoserine. Y711 and Y721 each carry phosphotyrosine. At S722 the chain carries Phosphoserine.

Interacts with AP1G1. Interacts with NOTCH1. Expressed in brain, spinal cord and adrenal gland.

The protein resides in the cell membrane. In terms of biological role, activator of the NOTCH1 pathway. May mediate neuron-glia interaction during astrocytogenesis. In Homo sapiens (Human), this protein is Delta and Notch-like epidermal growth factor-related receptor (DNER).